Here is an 84-residue protein sequence, read N- to C-terminus: Metallothionein type 2b (84 aa).

Belongs to the metallothionein superfamily. Type 15 family. Expressed in leaves, stems and roots.

Its subcellular location is the cytoplasm. It localises to the nucleus. In terms of biological role, metallothioneins have a high content of cysteine residues that bind various heavy metals. Probably involved in maintaining homeostasis of essential transition metals and detoxification of toxic metals. Increases cadmium and zinc tolerance when expressed in heterologous systems. Metal chelator binding 6 cadmium or 5 zinc atoms per protein. This Colocasia esculenta (Wild taro) protein is Metallothionein type 2b.